We begin with the raw amino-acid sequence, 463 residues long: Glutamate--tRNA ligase 1 (463 aa).

The 'HIGH' region signature appears at 10-20 (PSPTGYLHIGG). A 'KMSKS' region motif is present at residues 238-242 (KLSKR). Lysine 241 contributes to the ATP binding site.

Belongs to the class-I aminoacyl-tRNA synthetase family. Glutamate--tRNA ligase type 1 subfamily. In terms of assembly, monomer.

The protein resides in the cytoplasm. The catalysed reaction is tRNA(Glu) + L-glutamate + ATP = L-glutamyl-tRNA(Glu) + AMP + diphosphate. Functionally, catalyzes the attachment of glutamate to tRNA(Glu) in a two-step reaction: glutamate is first activated by ATP to form Glu-AMP and then transferred to the acceptor end of tRNA(Glu). The chain is Glutamate--tRNA ligase 1 from Helicobacter pylori (strain P12).